The following is a 153-amino-acid chain: 3-hydroxyacyl-[acyl-carrier-protein] dehydratase FabZ (153 aa).

H47 is an active-site residue.

This sequence belongs to the thioester dehydratase family. FabZ subfamily.

It localises to the cytoplasm. The catalysed reaction is a (3R)-hydroxyacyl-[ACP] = a (2E)-enoyl-[ACP] + H2O. Involved in unsaturated fatty acids biosynthesis. Catalyzes the dehydration of short chain beta-hydroxyacyl-ACPs and long chain saturated and unsaturated beta-hydroxyacyl-ACPs. The chain is 3-hydroxyacyl-[acyl-carrier-protein] dehydratase FabZ from Myxococcus xanthus (strain DK1622).